Reading from the N-terminus, the 291-residue chain is Methylsterol monooxygenase 1 (291 aa).

2 helical membrane-spanning segments follow: residues 55–75 (LIVHELIYFLFCLPGFIFQFL) and 100–120 (MLLFNHFCIQLPLICGTYYFT). The region spanning 145-274 (CAVIEDTWHY…FTWWDRLFDT (130 aa)) is the Fatty acid hydroxylase domain. The Histidine box-1 signature appears at 157 to 161 (HRALH). The Histidine box-2 motif lies at 170–174 (HKVHH). The chain crosses the membrane as a helical span at residues 199-219 (FFIGTMVFCNHMILLWAWVTF). The Histidine box-3 signature appears at 249 to 255 (FHDFHHM).

This sequence belongs to the sterol desaturase family. Fe cation is required as a cofactor.

It localises to the endoplasmic reticulum membrane. The catalysed reaction is 4,4-dimethyl-5alpha-cholest-7-en-3beta-ol + 6 Fe(II)-[cytochrome b5] + 3 O2 + 5 H(+) = 4alpha-carboxy-4beta-methyl-5alpha-cholest-7-ene-3beta-ol + 6 Fe(III)-[cytochrome b5] + 4 H2O. The protein operates within steroid biosynthesis; zymosterol biosynthesis; zymosterol from lanosterol: step 3/6. Its function is as follows. Catalyzes the first step in the removal of the two C-4 methyl groups of 4,4-dimethylzymosterol. In Danio rerio (Zebrafish), this protein is Methylsterol monooxygenase 1 (msmo1).